The primary structure comprises 381 residues: Alkanesulfonate monooxygenase (381 aa).

The protein belongs to the SsuD family. In terms of assembly, homotetramer.

It catalyses the reaction an alkanesulfonate + FMNH2 + O2 = an aldehyde + FMN + sulfite + H2O + 2 H(+). Catalyzes the desulfonation of aliphatic sulfonates. The sequence is that of Alkanesulfonate monooxygenase from Escherichia coli O6:K15:H31 (strain 536 / UPEC).